The chain runs to 166 residues: Kelch repeat protein B10 (166 aa).

2 Kelch repeats span residues 25–76 (TIFV…STFG) and 77–129 (MLYF…KLNN).

It belongs to the poxviruses Kelch family.

In Oryctolagus cuniculus (Rabbit), this protein is Kelch repeat protein B10.